Here is a 726-residue protein sequence, read N- to C-terminus: Kinesin-like protein KIN-10B (726 aa).

Disordered stretches follow at residues 1–20 (MEQQQKQEPGGGGGGVRVVA), 60–82 (AATAAASGRGDGPKDKQQQQQQK), and 402–423 (KNARPGFNNSGVKGGQTPTANR). The region spanning 15-359 (GVRVVARICP…LALASRSSQV (345 aa)) is the Kinesin motor domain. Over residues 408 to 423 (FNNSGVKGGQTPTANR) the composition is skewed to polar residues.

This sequence belongs to the TRAFAC class myosin-kinesin ATPase superfamily. Kinesin family. KIN-10 subfamily.

This Oryza sativa subsp. japonica (Rice) protein is Kinesin-like protein KIN-10B.